Consider the following 519-residue polypeptide: Ribonuclease Y (519 aa).

Residues P3–V23 form a helical membrane-spanning segment. The 64-residue stretch at T209–L272 folds into the KH domain. In terms of domain architecture, HD spans V335–A428.

It belongs to the RNase Y family.

It localises to the cell membrane. Endoribonuclease that initiates mRNA decay. This chain is Ribonuclease Y, found in Bacillus velezensis (strain DSM 23117 / BGSC 10A6 / LMG 26770 / FZB42) (Bacillus amyloliquefaciens subsp. plantarum).